The chain runs to 588 residues: Calcium/calmodulin-dependent protein kinase kinase 2 (588 aa).

The span at 1-11 (MSSCVSSQPTS) shows a compositional bias: polar residues. 2 disordered regions span residues 1 to 34 (MSSC…KPCE) and 64 to 147 (DLNL…PTVE). S2 carries the N-acetylserine modification. 5 positions are modified to phosphoserine: S99, S114, S129, S133, and S137. Residues 101-116 (QEPSQGGPASSSNSLD) show a composition bias toward polar residues. A compositionally biased stretch (low complexity) spans 124–139 (PSLSYSPASSPQSSPR). The 282-residue stretch at 165-446 (YTLKDEIGKG…VPEIKLHPWV (282 aa)) folds into the Protein kinase domain. ATP contacts are provided by residues 171-179 (IGKGSYGVV) and K194. The RP domain stretch occupies residues 204-226 (QAGFPRRPPPRGARPAPGGCIQP). Positions 205-225 (AGFPRRPPPRGARPAPGGCIQ) are disordered. The active-site Proton acceptor is the D312. The tract at residues 472–477 (ENSVKH) is autoinhibitory domain. The interval 475–500 (VKHIPSLATVILVKTMIRKRSFGNPF) is calmodulin-binding. S495, S511, T522, and S572 each carry phosphoserine. The interval 497-588 (GNPFEGSRRE…LQPEEVMEPE (92 aa)) is disordered. Positions 521-536 (PTREWEPLSEPKEARQ) are enriched in basic and acidic residues. The segment covering 570 to 580 (PGSPPRMPPLQ) has biased composition (pro residues).

It belongs to the protein kinase superfamily. Ser/Thr protein kinase family. In terms of assembly, interacts with calmodulin. Autophosphorylated and phosphorylated by PKA. Each isoform may show a different pattern of phosphorylation. Expressed in all tissues tested. A differential expression pattern compared to CAMKK1 is observed in the brain.

It localises to the nucleus. The protein localises to the cytoplasm. It is found in the cell projection. The protein resides in the neuron projection. It catalyses the reaction L-seryl-[protein] + ATP = O-phospho-L-seryl-[protein] + ADP + H(+). The catalysed reaction is L-threonyl-[protein] + ATP = O-phospho-L-threonyl-[protein] + ADP + H(+). Activated by Ca(2+)/calmodulin. Binding of calmodulin may relieve intrasteric autoinhibition. Autophosphorylation does not alter activity or regulation by Ca(2+)/calmodulin. In part, activity is independent on Ca(2+)/calmodulin. Functionally, calcium/calmodulin-dependent protein kinase belonging to a proposed calcium-triggered signaling cascade involved in a number of cellular processes. Phosphorylates CAMK1, CAMK4 and CAMK1D. Efficiently phosphorylates 5'-AMP-activated protein kinase (AMPK) trimer, including that consisting of PRKAA1, PRKAB1 and PRKAG1. This phosphorylation is stimulated in response to Ca(2+) signals. May play a role in neurite growth. Isoform 2 may promote neurite elongation, while isoform 1 may promoter neurite branching. May be involved in hippocampal activation of CREB1. This is Calcium/calmodulin-dependent protein kinase kinase 2 (Camkk2) from Mus musculus (Mouse).